Reading from the N-terminus, the 145-residue chain is Actin-depolymerizing factor 11 (145 aa).

The region spanning 11 to 145 (SSGIGVAAEC…DIELLRERAH (135 aa)) is the ADF-H domain.

The protein belongs to the actin-binding proteins ADF family.

Its function is as follows. Actin-depolymerizing protein. Severs actin filaments (F-actin) and binds to actin monomers. In Oryza sativa subsp. japonica (Rice), this protein is Actin-depolymerizing factor 11 (ADF11).